Consider the following 318-residue polypeptide: Aspartate carbamoyltransferase catalytic subunit (318 aa).

The carbamoyl phosphate site is built by arginine 67 and threonine 68. Position 95 (lysine 95) interacts with L-aspartate. Residues arginine 117, histidine 145, and glutamine 148 each contribute to the carbamoyl phosphate site. Residues arginine 178 and arginine 236 each contribute to the L-aspartate site. Residues glycine 277 and proline 278 each coordinate carbamoyl phosphate.

The protein belongs to the aspartate/ornithine carbamoyltransferase superfamily. ATCase family. In terms of assembly, heterododecamer (2C3:3R2) of six catalytic PyrB chains organized as two trimers (C3), and six regulatory PyrI chains organized as three dimers (R2).

It catalyses the reaction carbamoyl phosphate + L-aspartate = N-carbamoyl-L-aspartate + phosphate + H(+). It participates in pyrimidine metabolism; UMP biosynthesis via de novo pathway; (S)-dihydroorotate from bicarbonate: step 2/3. In terms of biological role, catalyzes the condensation of carbamoyl phosphate and aspartate to form carbamoyl aspartate and inorganic phosphate, the committed step in the de novo pyrimidine nucleotide biosynthesis pathway. This Roseiflexus castenholzii (strain DSM 13941 / HLO8) protein is Aspartate carbamoyltransferase catalytic subunit.